The primary structure comprises 494 residues: NADPH:adrenodoxin oxidoreductase, mitochondrial (494 aa).

The transit peptide at 1 to 34 (MAPRCWRWWSWSAWPGVRPLPSRSTPTPGFCKKF) directs the protein to the mitochondrion. FAD-binding residues include alanine 51, glutamate 72, leucine 80, and valine 116. NADP(+)-binding positions include 187-190 (QGNV), 231-232 (RR), and glutamate 243. Serine 313 carries the post-translational modification Phosphoserine. FAD contacts are provided by residues tryptophan 401 and 408–410 (GVI). Residue glycine 408 participates in NADP(+) binding.

Belongs to the ferredoxin--NADP reductase type 1 family. In terms of assembly, monomer. Interacts directly with FDX1. Requires FAD as cofactor.

The protein localises to the mitochondrion inner membrane. It carries out the reaction 2 reduced [adrenodoxin] + NADP(+) + H(+) = 2 oxidized [adrenodoxin] + NADPH. It catalyses the reaction 2 reduced [2Fe-2S]-[ferredoxin] + NADP(+) + H(+) = 2 oxidized [2Fe-2S]-[ferredoxin] + NADPH. The protein operates within steroid metabolism; cholesterol metabolism. Its function is as follows. Serves as the first electron transfer protein in all the mitochondrial P450 systems including cholesterol side chain cleavage in all steroidogenic tissues, steroid 11-beta hydroxylation in the adrenal cortex, 25-OH-vitamin D3-24 hydroxylation in the kidney, and sterol C-27 hydroxylation in the liver. Also acts as a ferredoxin--NADP(+) reductase essential for coenzyme Q biosynthesis: together with FDX2, transfers the electrons required for the hydroxylation reaction performed by COQ6. This Rattus norvegicus (Rat) protein is NADPH:adrenodoxin oxidoreductase, mitochondrial (Fdxr).